The chain runs to 319 residues: Ribonucleoside-diphosphate reductase 2 subunit beta (319 aa).

Fe cation contacts are provided by Asp-67, Glu-98, and His-101. Tyr-105 is a catalytic residue. Residues Glu-158, Glu-192, and His-195 each coordinate Fe cation.

The protein belongs to the ribonucleoside diphosphate reductase small chain family. In terms of assembly, tetramer of two alpha and two beta subunits. Fe cation is required as a cofactor.

It carries out the reaction a 2'-deoxyribonucleoside 5'-diphosphate + [thioredoxin]-disulfide + H2O = a ribonucleoside 5'-diphosphate + [thioredoxin]-dithiol. In terms of biological role, provides the precursors necessary for DNA synthesis. Catalyzes the biosynthesis of deoxyribonucleotides from the corresponding ribonucleotides. R2F contains the tyrosyl radical required for catalysis. This Salmonella typhimurium (strain LT2 / SGSC1412 / ATCC 700720) protein is Ribonucleoside-diphosphate reductase 2 subunit beta (nrdF).